A 253-amino-acid chain; its full sequence is Nurim homolog (253 aa).

Topologically, residues 1–2 (MA) are nuclear. The helical transmembrane segment at 3-30 (TFAKVMLLLSSVATFGYTFFVVGKLMLF) threads the bilayer. The Perinuclear space segment spans residues 31–56 (LSTPRSISKAHTWIFNLLDNKSRLET). A helical transmembrane segment spans residues 57 to 78 (AYGPIVFDTLYLIGFIFQHSFL). The Nuclear segment spans residues 79 to 96 (KSALVKNLWRKLGLAAAE). The chain crosses the membrane as a helical span at residues 97–113 (RTIYSLTSSICLHYLLK). Residues 114–132 (NWLPAQSIVLWQVDVDESA) are Perinuclear space-facing. Residues 133–161 (PLWWTFVVTHGLGWAVIFGGSLIMDLPEL) traverse the membrane as a helical segment. At 162–188 (LGVKQVYYDLKEYGEPVAYKSSELRNL) the chain is on the nuclear side. The helical transmembrane segment at 189–207 (YSHVRHPSFVGLSVILFAT) threads the bilayer. The Perinuclear space segment spans residues 208 to 213 (NVMSLD). A helical membrane pass occupies residues 214–231 (RLLLASLLTVYMYVAWST). The Nuclear portion of the chain corresponds to 232–253 (DDKDVAYQKQQLRNKKHELKAQ).

The protein belongs to the nurim family.

It localises to the nucleus inner membrane. This Drosophila pseudoobscura pseudoobscura (Fruit fly) protein is Nurim homolog (nrm).